A 146-amino-acid polypeptide reads, in one-letter code: Phospholipase A2 OS2 (146 aa).

Positions 1 to 27 are cleaved as a signal peptide; the sequence is MHPAHLLVLLAVCVSLLGASDIPPLPL. Disulfide bonds link cysteine 38-cysteine 99, cysteine 54-cysteine 145, cysteine 56-cysteine 72, cysteine 71-cysteine 126, cysteine 78-cysteine 119, cysteine 88-cysteine 112, and cysteine 106-cysteine 117. Tyrosine 55, glycine 57, and glycine 59 together coordinate Ca(2+). The active site involves histidine 75. Aspartate 76 lines the Ca(2+) pocket. Aspartate 120 is a catalytic residue.

It belongs to the phospholipase A2 family. Group I subfamily. D49 sub-subfamily. In terms of assembly, monomer. Ca(2+) is required as a cofactor. In terms of tissue distribution, expressed by the venom gland.

The protein localises to the secreted. The enzyme catalyses a 1,2-diacyl-sn-glycero-3-phosphocholine + H2O = a 1-acyl-sn-glycero-3-phosphocholine + a fatty acid + H(+). Its function is as follows. Snake venom phospholipase A2 (PLA2) that shows high presynaptic neurotoxicity in vertebrata that is independent of catalytic activity, as well as local myotoxicity when intramuscularly injected into mice. Blocks acetylcholine release in Aplysia neurons, and potentiates pro-inflammatory cellular signaling. Potentiates glutamate excitoxicity when coinjected into brain of rats. May act by binding in a calcium-dependent fashion and with high affinity to a neuronal-type (N-type) PLA2 receptor, and with very high affinity to a muscle-type (M-type) PLA2 receptor. In vitro, shows a high-specific activity on E.coli membranes and is more efficient on the anionic phospholipid POPG than on the anionic phospholipid POPS or the zwitterionic phospholipid POPC. Exerts catalytically-independent anti-HIV (IC(50) is 35 nM) activity and catalytically-dependent antimalarial activity (IC(50) is 3.1 nM when tested on P.falciparum grown in serum that contains lipoproteins). PLA2 catalyzes the calcium-dependent hydrolysis of the 2-acyl groups in 3-sn-phosphoglycerides. This is Phospholipase A2 OS2 from Oxyuranus scutellatus scutellatus (Australian taipan).